Here is a 450-residue protein sequence, read N- to C-terminus: Sorting nexin-4 (450 aa).

The residue at position 1 (M1) is an N-acetylmethionine. Residues 1–46 form a disordered region; the sequence is MEQAPPDPEKLLQPGPLEPLGGPGAVLEAAVGEENEGTREDGSGVD. Low complexity predominate over residues 11–20; that stretch reads LLQPGPLEPL. Positions 61–187 constitute a PX domain; that stretch reads SVSEAEKRTG…YSFLTQEGNW (127 aa). Residues R106, S108, K132, and R154 each contribute to the a 1,2-diacyl-sn-glycero-3-phospho-(1D-myo-inositol-3-phosphate) site.

It belongs to the sorting nexin family. Heterodimer; heterodimerizes with SNX7 or SNX30. Interacts with WWC1/KIBRA. Identified in a complex with WWC1/KIBRA and dynein components DYNLL1 and DYNC1I2. Interacts with BIN1.

Its subcellular location is the early endosome. It is found in the early endosome membrane. Its function is as follows. Involved in the regulation of endocytosis and in several stages of intracellular trafficking. Plays a role in recycling endocytosed transferrin receptor and prevent its degradation. Involved in autophagosome assembly by regulating trafficking and recycling of phospholipid scramblase ATG9A. The chain is Sorting nexin-4 from Mus musculus (Mouse).